A 369-amino-acid chain; its full sequence is 3-isopropylmalate dehydrogenase (369 aa).

An NAD(+)-binding site is contributed by 77–90; sequence GPKWDDLPFDKKPE. Substrate contacts are provided by Arg97, Arg107, Arg135, and Asp226. Mg(2+) is bound by residues Asp226, Asp250, and Asp254. An NAD(+)-binding site is contributed by 289 to 301; the sequence is GSAPDIAGKDMAN.

This sequence belongs to the isocitrate and isopropylmalate dehydrogenases family. LeuB type 1 subfamily. As to quaternary structure, homodimer. It depends on Mg(2+) as a cofactor. Mn(2+) serves as cofactor.

The protein localises to the cytoplasm. It carries out the reaction (2R,3S)-3-isopropylmalate + NAD(+) = 4-methyl-2-oxopentanoate + CO2 + NADH. Its pathway is amino-acid biosynthesis; L-leucine biosynthesis; L-leucine from 3-methyl-2-oxobutanoate: step 3/4. Functionally, catalyzes the oxidation of 3-carboxy-2-hydroxy-4-methylpentanoate (3-isopropylmalate) to 3-carboxy-4-methyl-2-oxopentanoate. The product decarboxylates to 4-methyl-2 oxopentanoate. This Paramagnetospirillum magneticum (strain ATCC 700264 / AMB-1) (Magnetospirillum magneticum) protein is 3-isopropylmalate dehydrogenase.